Here is a 416-residue protein sequence, read N- to C-terminus: Advanced glycosylation end product-specific receptor (416 aa).

A signal peptide spans methionine 1–glycine 22. Positions aspartate 23–arginine 115 constitute an Ig-like V-type domain. Residues aspartate 23 to alanine 352 lie on the Extracellular side of the membrane. N-linked (GlcNAc...) asparagine glycosylation is found at asparagine 25 and asparagine 80. 2 cysteine pairs are disulfide-bonded: cysteine 38-cysteine 98 and cysteine 143-cysteine 207. 2 Ig-like C2-type domains span residues proline 123 to histidine 220 and proline 238 to serine 327. Residues leucine 353–tryptophan 373 form a helical membrane-spanning segment. Residues histidine 374–proline 416 lie on the Cytoplasmic side of the membrane. Residues arginine 377 to proline 416 form a disordered region. The span at asparagine 389–alanine 408 shows a compositional bias: acidic residues.

As to quaternary structure, constitutive homodimer; disulfide-linked. Forms homooligomers. Interacts with S100A1 and APP. Interacts with S100B, S100A12 and S100A14. Interacts with TIRAP. Interacts with HMGB1. Interacts with LGP2; this interaction plays an important role in AGER-mediated pro-inflammatory responses and cytokine release. Interacts with double-strand break repair protein MRE11 which is a core component of the MRN complex; the interaction enhances MRE11 endonuclease activity and promotes DNA repair. Interacts with the MCM2-7 complex via interaction with complex member MCM2; the interaction is increased following DNA replication stress and stabilizes the MCM2-7 complex at replication forks. Phosphorylated on its cytoplasmic domain by PKCzeta/PRKCZ upon ligand binding. Phosphorylated by ATM following DNA damage. Post-translationally, targeted by the ubiquitin E3 ligase subunit FBXO10 to mediate its ubiquitination and degradation. Endothelial cells.

The protein resides in the cell membrane. It localises to the cell projection. It is found in the phagocytic cup. The protein localises to the early endosome. Its subcellular location is the nucleus. Cell surface pattern recognition receptor that senses endogenous stress signals with a broad ligand repertoire including advanced glycation end products, S100 proteins, high-mobility group box 1 protein/HMGB1, amyloid beta/APP oligomers, nucleic acids, histones, phospholipids and glycosaminoglycans. Advanced glycosylation end products are nonenzymatically glycosylated proteins which accumulate in vascular tissue in aging and at an accelerated rate in diabetes. These ligands accumulate at inflammatory sites during the pathogenesis of various diseases including diabetes, vascular complications, neurodegenerative disorders and cancers, and RAGE transduces their binding into pro-inflammatory responses. Upon ligand binding, uses TIRAP and MYD88 as adapters to transduce the signal ultimately leading to the induction of inflammatory cytokines IL6, IL8 and TNFalpha through activation of NF-kappa-B. Interaction with S100A12 on endothelium, mononuclear phagocytes, and lymphocytes triggers cellular activation, with generation of key pro-inflammatory mediators. Interaction with S100B after myocardial infarction may play a role in myocyte apoptosis by activating ERK1/2 and p53/TP53 signaling. Contributes to the translocation of amyloid-beta peptide (ABPP) across the cell membrane from the extracellular to the intracellular space in cortical neurons. ABPP-initiated RAGE signaling, especially stimulation of p38 mitogen-activated protein kinase (MAPK), has the capacity to drive a transport system delivering ABPP as a complex with RAGE to the intraneuronal space. Participates in endothelial albumin transcytosis together with HMGB1 through the RAGE/SRC/Caveolin-1 pathway, leading to endothelial hyperpermeability. Mediates the loading of HMGB1 in extracellular vesicles (EVs) that shuttle HMGB1 to hepatocytes by transferrin-mediated endocytosis and subsequently promote hepatocyte pyroptosis by activating the NLRP3 inflammasome. Binds to DNA and promotes extracellular hypomethylated DNA (CpG DNA) uptake by cells via the endosomal route to activate inflammatory responses. Mediates phagocytosis by non-professional phagocytes (NPP) and this is enhanced by binding to ligands including RNA, DNA, HMGB1 and histones. Promotes NPP-mediated phagocytosis of Saccharomyces cerevisiae spores by binding to RNA attached to the spore wall. Also promotes NPP-mediated phagocytosis of apoptotic cells. Following DNA damage, recruited to DNA double-strand break sites where it colocalizes with the MRN repair complex via interaction with double-strand break repair protein MRE11. Enhances the endonuclease activity of MRE11, promoting the end resection of damaged DNA. Promotes DNA damage repair in trophoblasts which enhances trophoblast invasion and contributes to placental development and maintenance. Protects cells from DNA replication stress by localizing to damaged replication forks where it stabilizes the MCM2-7 complex and promotes faithful progression of the replication fork. In Bos taurus (Bovine), this protein is Advanced glycosylation end product-specific receptor (AGER).